A 453-amino-acid polypeptide reads, in one-letter code: DDB1- and CUL4-associated factor 12 (453 aa).

The span at 1 to 12 (MARKVVSRKRKA) shows a compositional bias: basic residues. The interval 1–34 (MARKVVSRKRKAPASPGAGSDAQGPQFGWDHSLH) is disordered. The tract at residues 1 to 38 (MARKVVSRKRKAPASPGAGSDAQGPQFGWDHSLHKRKR) is required for nuclear location and interaction with MOV10. The residue at position 15 (Ser-15) is a Phosphoserine. 6 WD repeats span residues 81–122 (EREF…TSQI), 123–175 (TKIP…TLDP), 176–242 (VCVG…ALKD), 243–286 (IPKE…NTLS), 287–331 (KLLS…SYNV), and 332–366 (KSVCSRERGSGIRSVSFYEHIITVGTGQGSLLFYD).

It belongs to the WD repeat DCAF12 family. Component of the DCX(DCAF12) E3 ubiquitin ligase complex, at least composed of CUL4 (CUL4A or CUL4B), DDB1, DCAF12 and RBX1. In terms of tissue distribution, highly expressed in lung cancer tissues and some cancer cell lines. Restricted expression in normal testis.

It localises to the cytoplasm. The protein resides in the cytoskeleton. It is found in the microtubule organizing center. Its subcellular location is the centrosome. The protein localises to the nucleus. It participates in protein modification; protein ubiquitination. In terms of biological role, substrate-recognition component of a DCX (DDB1-CUL4-X-box) E3 ubiquitin-protein ligase complex of the DesCEND (destruction via C-end degrons) pathway, which recognizes a C-degron located at the extreme C terminus of target proteins, leading to their ubiquitination and degradation. The C-degron recognized by the DesCEND pathway is usually a motif of less than ten residues and can be present in full-length proteins, truncated proteins or proteolytically cleaved forms. The DCX(DCAF12) complex specifically recognizes proteins with a diglutamate (Glu-Glu) at the C-terminus, such as MAGEA3, MAGEA6 and CCT5, leading to their ubiquitination and degradation. Ubiquitination of MAGEA3, MAGEA6 by DCX(DCAF12) complex is required for starvation-induced autophagy. Also directly recognizes the C-terminal glutamate-leucine (Glu-Leu) degron as an alternative degron in proteins such as MOV10, leading to their ubiquitination and degradation. Controls the protein level of MOV10 during spermatogenesis and in T cells, especially after their activation. The protein is DDB1- and CUL4-associated factor 12 of Homo sapiens (Human).